Here is a 400-residue protein sequence, read N- to C-terminus: Nicotinate phosphoribosyltransferase (400 aa).

The residue at position 220 (H220) is a Phosphohistidine; by autocatalysis.

It belongs to the NAPRTase family. Post-translationally, transiently phosphorylated on a His residue during the reaction cycle. Phosphorylation strongly increases the affinity for substrates and increases the rate of nicotinate D-ribonucleotide production. Dephosphorylation regenerates the low-affinity form of the enzyme, leading to product release.

The enzyme catalyses nicotinate + 5-phospho-alpha-D-ribose 1-diphosphate + ATP + H2O = nicotinate beta-D-ribonucleotide + ADP + phosphate + diphosphate. It functions in the pathway cofactor biosynthesis; NAD(+) biosynthesis; nicotinate D-ribonucleotide from nicotinate: step 1/1. Functionally, catalyzes the synthesis of beta-nicotinate D-ribonucleotide from nicotinate and 5-phospho-D-ribose 1-phosphate at the expense of ATP. This Salmonella typhi protein is Nicotinate phosphoribosyltransferase.